The primary structure comprises 336 residues: Ferrochelatase (336 aa).

The Fe cation site is built by histidine 206 and glutamate 287.

The protein belongs to the ferrochelatase family.

The protein localises to the cytoplasm. The catalysed reaction is heme b + 2 H(+) = protoporphyrin IX + Fe(2+). The protein operates within porphyrin-containing compound metabolism; protoheme biosynthesis; protoheme from protoporphyrin-IX: step 1/1. Functionally, catalyzes the ferrous insertion into protoporphyrin IX. The protein is Ferrochelatase of Neisseria gonorrhoeae (strain ATCC 700825 / FA 1090).